Here is a 316-residue protein sequence, read N- to C-terminus: Acetyl-coenzyme A carboxylase carboxyl transferase subunit alpha (316 aa).

The region spanning 40-293 is the CoA carboxyltransferase C-terminal domain; the sequence is LERRSKDALR…GETIENGFRE (254 aa).

Belongs to the AccA family. Acetyl-CoA carboxylase is a heterohexamer composed of biotin carboxyl carrier protein (AccB), biotin carboxylase (AccC) and two subunits each of ACCase subunit alpha (AccA) and ACCase subunit beta (AccD).

It localises to the cytoplasm. It carries out the reaction N(6)-carboxybiotinyl-L-lysyl-[protein] + acetyl-CoA = N(6)-biotinyl-L-lysyl-[protein] + malonyl-CoA. It functions in the pathway lipid metabolism; malonyl-CoA biosynthesis; malonyl-CoA from acetyl-CoA: step 1/1. Component of the acetyl coenzyme A carboxylase (ACC) complex. First, biotin carboxylase catalyzes the carboxylation of biotin on its carrier protein (BCCP) and then the CO(2) group is transferred by the carboxyltransferase to acetyl-CoA to form malonyl-CoA. The chain is Acetyl-coenzyme A carboxylase carboxyl transferase subunit alpha from Chelativorans sp. (strain BNC1).